The following is a 442-amino-acid chain: ATP-dependent RNA helicase SUB2 (442 aa).

Positions 59–87 (TGFRDFLLKGELLRAITDCGFEHPSEVQQ) match the Q motif motif. One can recognise a Helicase ATP-binding domain in the interval 90 to 265 (IPTAILNVDV…KKFMRNPLEV (176 aa)). 103–110 (AKSGLGKT) lines the ATP pocket. Residues 212 to 215 (DECD) carry the DECD box motif. Residues 293–438 (KLNELLDSLE…EYPQGGVDSS (146 aa)) form the Helicase C-terminal domain.

This sequence belongs to the DEAD box helicase family. DECD subfamily.

The protein localises to the nucleus. It carries out the reaction ATP + H2O = ADP + phosphate + H(+). In terms of biological role, ATP-binding RNA helicase involved in transcription elongation and required for the export of mRNA out of the nucleus. SUB2 also plays a role in pre-mRNA splicing and spliceosome assembly. May be involved in rDNA and telomeric silencing, and maintenance of genome integrity. This is ATP-dependent RNA helicase SUB2 (SUB2) from Ajellomyces capsulatus (strain NAm1 / WU24) (Darling's disease fungus).